The primary structure comprises 221 residues: Tetraspanin-2 (221 aa).

The Cytoplasmic segment spans residues 1-13 (MGRFRGGLRCIKY). A helical membrane pass occupies residues 14–34 (LLLGFNLLFWLAGSAVIAFGL). Residues 35–54 (WFRFGGTIKDLSSEEKSPEY) are Extracellular-facing. A helical membrane pass occupies residues 55-75 (FYVGLYVLVGAGALMMAVGFF). Topologically, residues 76–90 (GCCGAMRESQCVLGS) are cytoplasmic. A helical membrane pass occupies residues 91–111 (FFTCLLVIFAAEVTTGVFAFI). Residues 112 to 188 (GKDVAIRHVQ…ETIISVKLQL (77 aa)) lie on the Extracellular side of the membrane. N139 is a glycosylation site (N-linked (GlcNAc...) asparagine). Residues 189-209 (IGIVGIGIAGLTIFGMIFSMV) form a helical membrane-spanning segment. The Cytoplasmic portion of the chain corresponds to 210 to 221 (LCCAIRNSRDVI).

The protein belongs to the tetraspanin (TM4SF) family. In terms of tissue distribution, expression is restricted to the nervous system.

The protein localises to the membrane. Its function is as follows. May play a role in signalling in oligodendrocytes in the early stages of their terminal differentiation into myelin-forming glia and may also function in stabilizing the mature sheath. The sequence is that of Tetraspanin-2 (Tspan2) from Rattus norvegicus (Rat).